The primary structure comprises 567 residues: Phenylalanine ammonia-lyase (567 aa).

Tyr-78 (proton donor/acceptor) is an active-site residue. Positions 167-169 form a cross-link, 5-imidazolinone (Ala-Gly); that stretch reads ASG. Ser-168 bears the 2,3-didehydroalanine (Ser) mark. (E)-cinnamate contacts are provided by Asn-223, Gln-311, Arg-317, Asn-347, Lys-419, Glu-448, and Asn-451.

Belongs to the PAL/histidase family. In terms of assembly, homotetramer. In terms of processing, contains an active site 4-methylidene-imidazol-5-one (MIO), which is formed autocatalytically by cyclization and dehydration of residues Ala-Ser-Gly.

It is found in the cytoplasm. It catalyses the reaction L-phenylalanine = (E)-cinnamate + NH4(+). It participates in phenylpropanoid metabolism; trans-cinnamate biosynthesis; trans-cinnamate from L-phenylalanine: step 1/1. In terms of biological role, catalyzes the non-oxidative deamination of L-phenylalanine to form trans-cinnamic acid, the first step in the phenylpropanoid pathway. The polypeptide is Phenylalanine ammonia-lyase (Trichormus variabilis (strain ATCC 29413 / PCC 7937) (Anabaena variabilis)).